We begin with the raw amino-acid sequence, 296 residues long: MIQVYNRTTKSYEEELIAGKKYIEWTYESPVGKTITELIAKKKLFSKLYGKYCDTKLSKSKISPFVDSFNIDMAMSKKKINEFKSFNDFFTRELNFDARPINSDNNILISPGDGRITAYEDIDLDNIIQIKGLTYSLKELINDDNVASKYKNGICVVLRLCPTDYHRFHFIDSGIPYENHPIKGHYYSVNPIALKSVPKLFCENKREWSLFKSDNFKDVLHIEVGATCVGSIIQTYSPRVRVNKGDEKGYFKFGGSTTILFFEQGSIEIDADIIEQSKLGFECKVIFGENIGTKVL.

Catalysis depends on charge relay system; for autoendoproteolytic cleavage activity residues aspartate 113, histidine 169, and serine 256. The active-site Schiff-base intermediate with substrate; via pyruvic acid; for decarboxylase activity is serine 256. At serine 256 the chain carries Pyruvic acid (Ser); by autocatalysis.

It belongs to the phosphatidylserine decarboxylase family. PSD-B subfamily. Prokaryotic type II sub-subfamily. Heterodimer of a large membrane-associated beta subunit and a small pyruvoyl-containing alpha subunit. Pyruvate serves as cofactor. Is synthesized initially as an inactive proenzyme. Formation of the active enzyme involves a self-maturation process in which the active site pyruvoyl group is generated from an internal serine residue via an autocatalytic post-translational modification. Two non-identical subunits are generated from the proenzyme in this reaction, and the pyruvate is formed at the N-terminus of the alpha chain, which is derived from the carboxyl end of the proenzyme. The autoendoproteolytic cleavage occurs by a canonical serine protease mechanism, in which the side chain hydroxyl group of the serine supplies its oxygen atom to form the C-terminus of the beta chain, while the remainder of the serine residue undergoes an oxidative deamination to produce ammonia and the pyruvoyl prosthetic group on the alpha chain. During this reaction, the Ser that is part of the protease active site of the proenzyme becomes the pyruvoyl prosthetic group, which constitutes an essential element of the active site of the mature decarboxylase.

It is found in the cell membrane. The enzyme catalyses a 1,2-diacyl-sn-glycero-3-phospho-L-serine + H(+) = a 1,2-diacyl-sn-glycero-3-phosphoethanolamine + CO2. Its pathway is phospholipid metabolism; phosphatidylethanolamine biosynthesis; phosphatidylethanolamine from CDP-diacylglycerol: step 2/2. Catalyzes the formation of phosphatidylethanolamine (PtdEtn) from phosphatidylserine (PtdSer). This Clostridium beijerinckii (strain ATCC 51743 / NCIMB 8052) (Clostridium acetobutylicum) protein is Phosphatidylserine decarboxylase proenzyme.